The primary structure comprises 239 residues: IkB-like protein (239 aa).

ANK repeat units follow at residues 48-77 (NKIT…YPGE), 87-116 (DGNS…KNGI), 124-153 (NGVT…NPNR), and 158-187 (KGFT…KPLF). A Nuclear localization signal motif is present at residues 81 to 87 (HYRRDKD). The Nuclear localization signal signature appears at 203–214 (KKKPKIIITGCE). The PxIxITxC motif; Interaction with host PPP3CA motif lies at 206–213 (PKIIITGC). Residues 228 to 231 (FLCV) carry the FLCV motif motif.

It belongs to the asfivirus A238L family. As to quaternary structure, interacts with host PPIA. Interacts with host PPP3CA/Calcineurin. Interacts with host RELA/p65; interaction of the 32 kDa form with host RELA results in the formation of a stable complex with NF-kappa-B. Interacts with host PPP3R1. Interacts with host EP300; this interaction inhibits the association of host EP300 with host RELA, JUN and NFATC2. In terms of processing, the protein exists in a 28 kDa and a 32 kDa form, probably due to post-translational modifications which are neither phosphorylation, nor sumoylation.

Its subcellular location is the host nucleus. It is found in the host cytoplasm. IkB-like protein that inhibits the binding of NF-kappa-B to DNA, thereby downregulating pro-inflammatory cytokine production. Forms a heterodimer with the NF-kappa-B subunit RELA/p65 and prevents the activation of the NF-kappa-B transcription factor. Inhibits calcineurin function, which is required for the induction of nuclear factor of activated T cells (NFAT)-dependent immune response genes. Prevents the binding of substrates to calcineurin without affecting the phosphatase activity. Does not contain the serine residues that are phosphorylated by host IkB kinase and thus is not degraded following stimulation of the NFkB pathway. This is IkB-like protein (A238L) from Ornithodoros (relapsing fever ticks).